The primary structure comprises 534 residues: UDP-glucuronosyltransferase 2A3 (534 aa).

A signal peptide spans methionine 1–alanine 18. The Extracellular portion of the chain corresponds to glycine 19 to valine 493. The N-linked (GlcNAc...) asparagine glycan is linked to asparagine 102. An N6-succinyllysine modification is found at lysine 135. Asparagine 204 carries N-linked (GlcNAc...) asparagine glycosylation. The chain crosses the membrane as a helical span at residues isoleucine 494–phenylalanine 514. The Cytoplasmic segment spans residues valine 515 to asparagine 534.

Belongs to the UDP-glycosyltransferase family. As to expression, highly expressed in liver, with lower levels in duodenum and jejunum.

It localises to the membrane. The catalysed reaction is glucuronate acceptor + UDP-alpha-D-glucuronate = acceptor beta-D-glucuronoside + UDP + H(+). Its function is as follows. UDP-glucuronosyltransferases catalyze phase II biotransformation reactions in which lipophilic substrates are conjugated with glucuronic acid to increase water solubility and enhance excretion. They are of major importance in the conjugation and subsequent elimination of potentially toxic xenobiotics and endogenous compounds. This Mus musculus (Mouse) protein is UDP-glucuronosyltransferase 2A3 (Ugt2a3).